The sequence spans 304 residues: Tetrahydromethanopterin S-methyltransferase subunit E (304 aa).

The next 6 membrane-spanning stretches (helical) occupy residues 3-23 (PLIG…AGAS), 86-106 (PLFA…TFAV), 131-151 (HTPV…VVSY), 152-172 (LMTV…IWGI), 233-253 (PVTG…TTVF), and 263-283 (WISV…NWKI).

It belongs to the MtrE family. The complex is composed of 8 subunits; MtrA, MtrB, MtrC, MtrD, MtrE, MtrF, MtrG and MtrH.

Its subcellular location is the cell membrane. It carries out the reaction 5-methyl-5,6,7,8-tetrahydromethanopterin + coenzyme M + 2 Na(+)(in) = 5,6,7,8-tetrahydromethanopterin + methyl-coenzyme M + 2 Na(+)(out). It participates in one-carbon metabolism; methanogenesis from CO(2); methyl-coenzyme M from 5,10-methylene-5,6,7,8-tetrahydromethanopterin: step 2/2. Part of a complex that catalyzes the formation of methyl-coenzyme M and tetrahydromethanopterin from coenzyme M and methyl-tetrahydromethanopterin. This is an energy-conserving, sodium-ion translocating step. The sequence is that of Tetrahydromethanopterin S-methyltransferase subunit E from Methanosarcina acetivorans (strain ATCC 35395 / DSM 2834 / JCM 12185 / C2A).